The chain runs to 305 residues: UDP-3-O-acyl-N-acetylglucosamine deacetylase (305 aa).

Zn(2+)-binding residues include His-78, His-237, and Asp-241. Catalysis depends on His-264, which acts as the Proton donor.

This sequence belongs to the LpxC family. The cofactor is Zn(2+).

The enzyme catalyses a UDP-3-O-[(3R)-3-hydroxyacyl]-N-acetyl-alpha-D-glucosamine + H2O = a UDP-3-O-[(3R)-3-hydroxyacyl]-alpha-D-glucosamine + acetate. The protein operates within glycolipid biosynthesis; lipid IV(A) biosynthesis; lipid IV(A) from (3R)-3-hydroxytetradecanoyl-[acyl-carrier-protein] and UDP-N-acetyl-alpha-D-glucosamine: step 2/6. Functionally, catalyzes the hydrolysis of UDP-3-O-myristoyl-N-acetylglucosamine to form UDP-3-O-myristoylglucosamine and acetate, the committed step in lipid A biosynthesis. The sequence is that of UDP-3-O-acyl-N-acetylglucosamine deacetylase from Burkholderia mallei (strain NCTC 10247).